The following is a 306-amino-acid chain: Bifunctional protein FolD 1 (306 aa).

NADP(+)-binding positions include 168-170 (GRS), Ser-193, and Ile-234.

It belongs to the tetrahydrofolate dehydrogenase/cyclohydrolase family. Homodimer.

The catalysed reaction is (6R)-5,10-methylene-5,6,7,8-tetrahydrofolate + NADP(+) = (6R)-5,10-methenyltetrahydrofolate + NADPH. It catalyses the reaction (6R)-5,10-methenyltetrahydrofolate + H2O = (6R)-10-formyltetrahydrofolate + H(+). Its pathway is one-carbon metabolism; tetrahydrofolate interconversion. Catalyzes the oxidation of 5,10-methylenetetrahydrofolate to 5,10-methenyltetrahydrofolate and then the hydrolysis of 5,10-methenyltetrahydrofolate to 10-formyltetrahydrofolate. This is Bifunctional protein FolD 1 from Rhizobium meliloti (strain 1021) (Ensifer meliloti).